The following is a 251-amino-acid chain: MTEAQRHQILLEMLAQLGFVTVEKVVERLGISPATARRDINKLGESGKLKKVRNGAEAITQQRPRWTPMNLHQAQNHDEKVRIAKAASQLVNPGESVVINCGSTAFLLGREMCGKPVQIITNYLPLANYLIDQEHDSVIIMGGQYNKSQSITLSPQGSENSLYAGHWMFTSGKGLTAEGLYKTDMLTAMAEQKMLSVVGKLVVLVDSSKIGERAGMLFSRADQIDMLITGKNANPEILQQLEAQGVSILRV.

The HTH deoR-type domain maps to 3 to 58; that stretch reads EAQRHQILLEMLAQLGFVTVEKVVERLGISPATARRDINKLGESGKLKKVRNGAEA. The H-T-H motif DNA-binding region spans 20 to 39; it reads VTVEKVVERLGISPATARRD.

The protein localises to the cytoplasm. Its function is as follows. Represses ulaG and the ulaABCDEF operon. The sequence is that of HTH-type transcriptional regulator UlaR from Shigella flexneri.